We begin with the raw amino-acid sequence, 263 residues long: uncharacterized protein (263 aa).

To B.subtilis soj.

This is an uncharacterized protein from Pseudomonas putida (strain ATCC 47054 / DSM 6125 / CFBP 8728 / NCIMB 11950 / KT2440).